Consider the following 241-residue polypeptide: Small ribosomal subunit protein uS2 (241 aa).

It belongs to the universal ribosomal protein uS2 family.

In Klebsiella pneumoniae (strain 342), this protein is Small ribosomal subunit protein uS2.